A 131-amino-acid chain; its full sequence is MAKRNVATKKKVVKKNIARGVVYISATFNNTNITITDEMGNVICWSTAGGLGFKGSKKSTPYAAQQAVESALSKAKEHGVKEVGIKVQGSGSGRETAIKSVGATEGVKVLWIKDITPLSHNGCRPPKRRRV.

It belongs to the universal ribosomal protein uS11 family. Part of the 30S ribosomal subunit. Interacts with proteins S7 and S18. Binds to IF-3.

In terms of biological role, located on the platform of the 30S subunit, it bridges several disparate RNA helices of the 16S rRNA. Forms part of the Shine-Dalgarno cleft in the 70S ribosome. In Helicobacter acinonychis (strain Sheeba), this protein is Small ribosomal subunit protein uS11.